A 200-amino-acid chain; its full sequence is Mediator of RNA polymerase II transcription subunit 29 (200 aa).

Composition is skewed to low complexity over residues 1 to 20 (MAAS…VSGP) and 36 to 48 (AQLV…GLLQ). A disordered region spans residues 1 to 48 (MAASQQQASATTSTASVSGPGSAGGSGPQQQPQPPAQLVGPAQSGLLQ). Ala-2 carries the post-translational modification N-acetylalanine.

This sequence belongs to the Mediator complex subunit 29 family. Component of the TRAP/SMCC mediator complex. Interacts with MED20/TRFP. Associates with the MED18-MED20 heteromer.

It is found in the nucleus. Functionally, component of the mediator complex, a complex that can either repress or activate transcription. Mediator complexes are essential for basal and regulated expression of nearly all RNA polymerase II-dependent genes. They may act as a bridge, conveying regulatory information from enhancers and other control elements to the promoter. In Bos taurus (Bovine), this protein is Mediator of RNA polymerase II transcription subunit 29 (MED29).